Here is a 386-residue protein sequence, read N- to C-terminus: NADPH-dependent alkenal/one oxidoreductase, chloroplastic (386 aa).

This sequence belongs to the zinc-containing alcohol dehydrogenase family. Quinone oxidoreductase subfamily.

The protein localises to the plastid. It localises to the chloroplast. Reduces the double bond in short-chain unsaturated carbonyls. Acts preferentially on alpha,beta-unsaturated ketones rather on alpha,beta-unsaturated aldehydes. Has no activity with (E)-2-hexenal and (E)-2-pentenal. Contributes to detoxify stromal reactive carbonyls produced under oxidative stress. In Arabidopsis thaliana (Mouse-ear cress), this protein is NADPH-dependent alkenal/one oxidoreductase, chloroplastic.